Reading from the N-terminus, the 90-residue chain is RNA-binding protein Hfq (90 aa).

The Sm domain maps to 9–68 (EPFLNTLRKEKVPVSIYLVNGIKLQGQIESFDQFVVLLRNNVNQMVYKHAISTIVPARRV).

It belongs to the Hfq family. Homohexamer.

In terms of biological role, RNA chaperone that binds small regulatory RNA (sRNAs) and mRNAs to facilitate mRNA translational regulation in response to envelope stress, environmental stress and changes in metabolite concentrations. Also binds with high specificity to tRNAs. The chain is RNA-binding protein Hfq from Halorhodospira halophila (strain DSM 244 / SL1) (Ectothiorhodospira halophila (strain DSM 244 / SL1)).